Reading from the N-terminus, the 430-residue chain is Tol-Pal system protein TolB (430 aa).

Residues 1–21 (MKQAFRVALGFLVLWASVLHA) form the signal peptide.

Belongs to the TolB family. The Tol-Pal system is composed of five core proteins: the inner membrane proteins TolA, TolQ and TolR, the periplasmic protein TolB and the outer membrane protein Pal. They form a network linking the inner and outer membranes and the peptidoglycan layer.

The protein resides in the periplasm. Part of the Tol-Pal system, which plays a role in outer membrane invagination during cell division and is important for maintaining outer membrane integrity. TolB occupies a key intermediary position in the Tol-Pal system because it communicates directly with both membrane-embedded components, Pal in the outer membrane and TolA in the inner membrane. The sequence is that of Tol-Pal system protein TolB from Yersinia pestis.